A 192-amino-acid polypeptide reads, in one-letter code: Imidazoleglycerol-phosphate dehydratase (192 aa).

The protein belongs to the imidazoleglycerol-phosphate dehydratase family.

The protein localises to the cytoplasm. The catalysed reaction is D-erythro-1-(imidazol-4-yl)glycerol 3-phosphate = 3-(imidazol-4-yl)-2-oxopropyl phosphate + H2O. It functions in the pathway amino-acid biosynthesis; L-histidine biosynthesis; L-histidine from 5-phospho-alpha-D-ribose 1-diphosphate: step 6/9. This is Imidazoleglycerol-phosphate dehydratase from Staphylococcus aureus (strain JH9).